The primary structure comprises 403 residues: Putative transport protein TP_0553 (403 aa).

Helical transmembrane passes span 10–30 (ISLF…FVPY), 31–51 (LTVL…YRAL), 92–112 (AAVF…FIAI), 202–222 (LYFF…ALPL), 243–263 (KGLF…YGIF), 271–291 (LAML…CVWL), 293–313 (VGIS…LFVA), and 350–370 (TFGF…FTVI).

Belongs to the autoinducer-2 exporter (AI-2E) (TC 2.A.86) family.

It is found in the cell membrane. This chain is Putative transport protein TP_0553, found in Treponema pallidum (strain Nichols).